Reading from the N-terminus, the 208-residue chain is MARYTGASCRLCRREGEKLYLKGERCTTNKCAIARRGYAPGQHGQNKKKLSEYGLQLREKQKARRYYGILEGQFRRYFEMAVKKKGITGENLLQILESRLDNVVYRMGLAVSRREARQLVRHGHFTVNGKRVDIPSYLVKVGDVIAVKEKSKSSPKMQSNKEYAAGRPRPKWLEYDAEEMSGKVVALPAREDIDLPIRENLIVELYSK.

In terms of domain architecture, S4 RNA-binding spans 98 to 178 (SRLDNVVYRM…RPKWLEYDAE (81 aa)).

The protein belongs to the universal ribosomal protein uS4 family. As to quaternary structure, part of the 30S ribosomal subunit. Contacts protein S5. The interaction surface between S4 and S5 is involved in control of translational fidelity.

In terms of biological role, one of the primary rRNA binding proteins, it binds directly to 16S rRNA where it nucleates assembly of the body of the 30S subunit. With S5 and S12 plays an important role in translational accuracy. The polypeptide is Small ribosomal subunit protein uS4 (Acetivibrio thermocellus (strain ATCC 27405 / DSM 1237 / JCM 9322 / NBRC 103400 / NCIMB 10682 / NRRL B-4536 / VPI 7372) (Clostridium thermocellum)).